Here is a 445-residue protein sequence, read N- to C-terminus: Histidinol dehydrogenase (445 aa).

Residues Tyr-144, Gln-205, and Asn-228 each coordinate NAD(+). The substrate site is built by Ser-251, Gln-273, and His-276. Residues Gln-273 and His-276 each contribute to the Zn(2+) site. Residues Glu-341 and His-342 each act as proton acceptor in the active site. Substrate is bound by residues His-342, Asp-375, Glu-429, and His-434. Asp-375 is a Zn(2+) binding site. His-434 lines the Zn(2+) pocket.

It belongs to the histidinol dehydrogenase family. Zn(2+) is required as a cofactor.

It catalyses the reaction L-histidinol + 2 NAD(+) + H2O = L-histidine + 2 NADH + 3 H(+). Its pathway is amino-acid biosynthesis; L-histidine biosynthesis; L-histidine from 5-phospho-alpha-D-ribose 1-diphosphate: step 9/9. Functionally, catalyzes the sequential NAD-dependent oxidations of L-histidinol to L-histidinaldehyde and then to L-histidine. This Cupriavidus pinatubonensis (strain JMP 134 / LMG 1197) (Cupriavidus necator (strain JMP 134)) protein is Histidinol dehydrogenase.